Consider the following 268-residue polypeptide: 4-hydroxy-tetrahydrodipicolinate reductase (268 aa).

Residues 10 to 15 (GASGRM) and aspartate 36 contribute to the NAD(+) site. An NADP(+)-binding site is contributed by arginine 37. NAD(+) contacts are provided by residues 99 to 101 (GTT) and 123 to 126 (SANM). The Proton donor/acceptor role is filled by histidine 156. Histidine 157 serves as a coordination point for (S)-2,3,4,5-tetrahydrodipicolinate. Lysine 160 acts as the Proton donor in catalysis. 166–167 (GT) is a binding site for (S)-2,3,4,5-tetrahydrodipicolinate.

It belongs to the DapB family.

The protein localises to the cytoplasm. The enzyme catalyses (S)-2,3,4,5-tetrahydrodipicolinate + NAD(+) + H2O = (2S,4S)-4-hydroxy-2,3,4,5-tetrahydrodipicolinate + NADH + H(+). It carries out the reaction (S)-2,3,4,5-tetrahydrodipicolinate + NADP(+) + H2O = (2S,4S)-4-hydroxy-2,3,4,5-tetrahydrodipicolinate + NADPH + H(+). It participates in amino-acid biosynthesis; L-lysine biosynthesis via DAP pathway; (S)-tetrahydrodipicolinate from L-aspartate: step 4/4. Functionally, catalyzes the conversion of 4-hydroxy-tetrahydrodipicolinate (HTPA) to tetrahydrodipicolinate. This Burkholderia pseudomallei (strain 1710b) protein is 4-hydroxy-tetrahydrodipicolinate reductase.